The primary structure comprises 421 residues: Mannose-1-phosphate guanyltransferase alpha-A (421 aa).

This sequence belongs to the transferase hexapeptide repeat family.

It carries out the reaction alpha-D-mannose 1-phosphate + GTP + H(+) = GDP-alpha-D-mannose + diphosphate. It functions in the pathway nucleotide-sugar biosynthesis; GDP-alpha-D-mannose biosynthesis; GDP-alpha-D-mannose from alpha-D-mannose 1-phosphate (GTP route): step 1/1. The chain is Mannose-1-phosphate guanyltransferase alpha-A (gmppa-a) from Xenopus laevis (African clawed frog).